A 622-amino-acid polypeptide reads, in one-letter code: Chaperone protein HscA homolog (622 aa).

The protein belongs to the heat shock protein 70 family.

Chaperone involved in the maturation of iron-sulfur cluster-containing proteins. Has a low intrinsic ATPase activity which is markedly stimulated by HscB. The chain is Chaperone protein HscA homolog from Burkholderia lata (strain ATCC 17760 / DSM 23089 / LMG 22485 / NCIMB 9086 / R18194 / 383).